The following is a 483-amino-acid chain: Glutamyl-tRNA(Gln) amidotransferase subunit A (483 aa).

Catalysis depends on charge relay system residues Lys76 and Ser151. Ser175 serves as the catalytic Acyl-ester intermediate.

The protein belongs to the amidase family. GatA subfamily. As to quaternary structure, heterotrimer of A, B and C subunits.

It carries out the reaction L-glutamyl-tRNA(Gln) + L-glutamine + ATP + H2O = L-glutaminyl-tRNA(Gln) + L-glutamate + ADP + phosphate + H(+). Allows the formation of correctly charged Gln-tRNA(Gln) through the transamidation of misacylated Glu-tRNA(Gln) in organisms which lack glutaminyl-tRNA synthetase. The reaction takes place in the presence of glutamine and ATP through an activated gamma-phospho-Glu-tRNA(Gln). The chain is Glutamyl-tRNA(Gln) amidotransferase subunit A from Pseudomonas fluorescens (strain Pf0-1).